The chain runs to 390 residues: Chorismate synthase (390 aa).

NADP(+)-binding residues include Arg-48 and Arg-54. FMN contacts are provided by residues 125-127, 238-239, Gly-278, 293-297, and Arg-319; these read RSS, NA, and KPTSS. Residues 359-390 form a disordered region; the sequence is PRIPGSTTNQIHPVEMQASAPRAEDPEPDESS.

This sequence belongs to the chorismate synthase family. As to quaternary structure, homotetramer. Requires FMNH2 as cofactor.

It carries out the reaction 5-O-(1-carboxyvinyl)-3-phosphoshikimate = chorismate + phosphate. It functions in the pathway metabolic intermediate biosynthesis; chorismate biosynthesis; chorismate from D-erythrose 4-phosphate and phosphoenolpyruvate: step 7/7. Its function is as follows. Catalyzes the anti-1,4-elimination of the C-3 phosphate and the C-6 proR hydrogen from 5-enolpyruvylshikimate-3-phosphate (EPSP) to yield chorismate, which is the branch point compound that serves as the starting substrate for the three terminal pathways of aromatic amino acid biosynthesis. This reaction introduces a second double bond into the aromatic ring system. In Nitrosomonas europaea (strain ATCC 19718 / CIP 103999 / KCTC 2705 / NBRC 14298), this protein is Chorismate synthase.